The chain runs to 136 residues: Large-conductance mechanosensitive channel (136 aa).

Transmembrane regions (helical) follow at residues 10 to 30 (FAMR…AAFG) and 76 to 96 (GVFI…FMAI).

This sequence belongs to the MscL family. In terms of assembly, homopentamer.

The protein localises to the cell inner membrane. Channel that opens in response to stretch forces in the membrane lipid bilayer. May participate in the regulation of osmotic pressure changes within the cell. This chain is Large-conductance mechanosensitive channel, found in Shigella boydii serotype 18 (strain CDC 3083-94 / BS512).